Reading from the N-terminus, the 396-residue chain is Methionine import ATP-binding protein MetN 2 (396 aa).

One can recognise an ABC transporter domain in the interval 41-280 (VSFELVGKVF…PRHGATRALL (240 aa)). Residue 77-84 (GRSGAGKS) coordinates ATP.

This sequence belongs to the ABC transporter superfamily. Methionine importer (TC 3.A.1.24) family. In terms of assembly, the complex is composed of two ATP-binding proteins (MetN), two transmembrane proteins (MetI) and a solute-binding protein (MetQ).

It localises to the cell inner membrane. The enzyme catalyses L-methionine(out) + ATP + H2O = L-methionine(in) + ADP + phosphate + H(+). The catalysed reaction is D-methionine(out) + ATP + H2O = D-methionine(in) + ADP + phosphate + H(+). In terms of biological role, part of the ABC transporter complex MetNIQ involved in methionine import. Responsible for energy coupling to the transport system. This is Methionine import ATP-binding protein MetN 2 from Burkholderia pseudomallei (strain K96243).